Reading from the N-terminus, the 134-residue chain is Large ribosomal subunit protein bL17 (134 aa).

Belongs to the bacterial ribosomal protein bL17 family. As to quaternary structure, part of the 50S ribosomal subunit. Contacts protein L32.

The polypeptide is Large ribosomal subunit protein bL17 (Thioalkalivibrio sulfidiphilus (strain HL-EbGR7)).